A 396-amino-acid chain; its full sequence is 1-deoxy-D-xylulose 5-phosphate reductoisomerase (396 aa).

Positions 13, 14, 15, 16, and 127 each coordinate NADPH. K128 is a binding site for 1-deoxy-D-xylulose 5-phosphate. Residue E129 participates in NADPH binding. Mn(2+) is bound at residue D153. 1-deoxy-D-xylulose 5-phosphate contacts are provided by S154, E155, S184, and H207. Mn(2+) is bound at residue E155. NADPH is bound at residue G213. 1-deoxy-D-xylulose 5-phosphate-binding residues include S220, N225, K226, and E229. Residue E229 coordinates Mn(2+).

It belongs to the DXR family. Mg(2+) serves as cofactor. It depends on Mn(2+) as a cofactor.

The catalysed reaction is 2-C-methyl-D-erythritol 4-phosphate + NADP(+) = 1-deoxy-D-xylulose 5-phosphate + NADPH + H(+). It functions in the pathway isoprenoid biosynthesis; isopentenyl diphosphate biosynthesis via DXP pathway; isopentenyl diphosphate from 1-deoxy-D-xylulose 5-phosphate: step 1/6. Functionally, catalyzes the NADPH-dependent rearrangement and reduction of 1-deoxy-D-xylulose-5-phosphate (DXP) to 2-C-methyl-D-erythritol 4-phosphate (MEP). The polypeptide is 1-deoxy-D-xylulose 5-phosphate reductoisomerase (Stutzerimonas stutzeri (strain A1501) (Pseudomonas stutzeri)).